The following is a 1234-amino-acid chain: DNA-directed RNA polymerase subunit beta (1234 aa).

The protein belongs to the RNA polymerase beta chain family. As to quaternary structure, the RNAP catalytic core consists of 2 alpha, 1 beta, 1 beta' and 1 omega subunit. When a sigma factor is associated with the core the holoenzyme is formed, which can initiate transcription.

The enzyme catalyses RNA(n) + a ribonucleoside 5'-triphosphate = RNA(n+1) + diphosphate. Functionally, DNA-dependent RNA polymerase catalyzes the transcription of DNA into RNA using the four ribonucleoside triphosphates as substrates. This Clostridium perfringens (strain SM101 / Type A) protein is DNA-directed RNA polymerase subunit beta.